The sequence spans 1242 residues: von Willebrand factor A domain-containing protein 5B2 (1242 aa).

A VIT domain is found at 1 to 138; that stretch reads MPGLYCPSSW…TMTVTLHSSR (138 aa). The 174-residue stretch at 354-527 folds into the VWFA domain; it reads ELLFLLDSSS…KALEPALSDI (174 aa). Disordered stretches follow at residues 569 to 650, 670 to 726, 751 to 794, 957 to 976, 987 to 1055, and 1118 to 1159; these read SRPP…SDTA, CSAS…CPLP, LAGR…GQGL, CSSE…SHLD, KGLQ…GSDH, and QGDS…GLGG. A compositionally biased stretch (low complexity) spans 588 to 604; the sequence is PSPEEAPSAASPGTEPT. Over residues 605–619 the composition is skewed to polar residues; sequence GTSEPLGTGTVSAEL. Residues 681–700 are compositionally biased toward low complexity; that stretch reads TGSSESPGSQGPGSPEGSAP. Over residues 1125-1138 the composition is skewed to low complexity; the sequence is SCSPSPSSGSEGPG.

The sequence is that of von Willebrand factor A domain-containing protein 5B2 (VWA5B2) from Homo sapiens (Human).